The sequence spans 194 residues: Large ribosomal subunit protein bL25 (194 aa).

It belongs to the bacterial ribosomal protein bL25 family. CTC subfamily. As to quaternary structure, part of the 50S ribosomal subunit; part of the 5S rRNA/L5/L18/L25 subcomplex. Contacts the 5S rRNA. Binds to the 5S rRNA independently of L5 and L18.

Its function is as follows. This is one of the proteins that binds to the 5S RNA in the ribosome where it forms part of the central protuberance. The protein is Large ribosomal subunit protein bL25 of Geotalea uraniireducens (strain Rf4) (Geobacter uraniireducens).